A 215-amino-acid chain; its full sequence is WAT1-related protein At3g28060 (215 aa).

Helical transmembrane passes span 48-68 (IIIG…AVAY), 82-102 (FALA…VSLF), 117-137 (IMLI…VVES), 146-166 (VFLA…GAIF), and 176-196 (VIGG…FHIA). One can recognise an EamA domain in the interval 65 to 186 (AVAYIVQTHI…IGGTLISIGF (122 aa)).

This sequence belongs to the drug/metabolite transporter (DMT) superfamily. Plant drug/metabolite exporter (P-DME) (TC 2.A.7.4) family.

It localises to the membrane. The sequence is that of WAT1-related protein At3g28060 from Arabidopsis thaliana (Mouse-ear cress).